A 68-amino-acid polypeptide reads, in one-letter code: Large ribosomal subunit protein uL29 (68 aa).

The protein belongs to the universal ribosomal protein uL29 family.

The chain is Large ribosomal subunit protein uL29 from Chloroflexus aggregans (strain MD-66 / DSM 9485).